Here is a 186-residue protein sequence, read N- to C-terminus: MVPFWAGLLVLSALPQTLGFLQHSEEPYVPGEWVLLHVVQGHIGAGNYSYLRLNHEGRIILHMQSLKGDADLYVSDKTLRPNFDTYKLQSTTCGPDVVVVPGDFLRPVGIGIYGHPSYMESEFEMKVFYDQKALAEIEIEKNSYSSDETPGQPRQSQGPEDTEEEEESILWTILIGILKIILEILF.

A signal peptide spans 1 to 19 (MVPFWAGLLVLSALPQTLG). Asparagine 47 carries N-linked (GlcNAc...) asparagine glycosylation. A disordered region spans residues 141-165 (KNSYSSDETPGQPRQSQGPEDTEEE). A compositionally biased stretch (polar residues) spans 142–159 (NSYSSDETPGQPRQSQGP).

This sequence belongs to the UPF0669 family.

The protein localises to the secreted. This Danio rerio (Zebrafish) protein is UPF0669 protein C6orf120 homolog.